Here is a 284-residue protein sequence, read N- to C-terminus: Lipoyl synthase (284 aa).

[4Fe-4S] cluster-binding residues include cysteine 36, cysteine 41, cysteine 47, cysteine 62, cysteine 66, cysteine 69, and serine 273. Residues 48–262 enclose the Radical SAM core domain; it reads WGKGTATFMI…RTIGLKKGFR (215 aa).

This sequence belongs to the radical SAM superfamily. Lipoyl synthase family. [4Fe-4S] cluster is required as a cofactor.

The protein localises to the cytoplasm. The enzyme catalyses [[Fe-S] cluster scaffold protein carrying a second [4Fe-4S](2+) cluster] + N(6)-octanoyl-L-lysyl-[protein] + 2 oxidized [2Fe-2S]-[ferredoxin] + 2 S-adenosyl-L-methionine + 4 H(+) = [[Fe-S] cluster scaffold protein] + N(6)-[(R)-dihydrolipoyl]-L-lysyl-[protein] + 4 Fe(3+) + 2 hydrogen sulfide + 2 5'-deoxyadenosine + 2 L-methionine + 2 reduced [2Fe-2S]-[ferredoxin]. It functions in the pathway protein modification; protein lipoylation via endogenous pathway; protein N(6)-(lipoyl)lysine from octanoyl-[acyl-carrier-protein]: step 2/2. Catalyzes the radical-mediated insertion of two sulfur atoms into the C-6 and C-8 positions of the octanoyl moiety bound to the lipoyl domains of lipoate-dependent enzymes, thereby converting the octanoylated domains into lipoylated derivatives. This chain is Lipoyl synthase, found in Phocaeicola vulgatus (strain ATCC 8482 / DSM 1447 / JCM 5826 / CCUG 4940 / NBRC 14291 / NCTC 11154) (Bacteroides vulgatus).